The following is a 145-amino-acid chain: Large ribosomal subunit protein uL24 (145 aa).

Disordered regions lie at residues 1 to 21 and 122 to 145; these read MKFN…HFNA and KAKS…KMQE. Residue Lys-136 forms a Glycyl lysine isopeptide (Lys-Gly) (interchain with G-Cter in SUMO2) linkage. A Phosphothreonine modification is found at Thr-139.

This sequence belongs to the universal ribosomal protein uL24 family. As to quaternary structure, component of the large ribosomal subunit. Interacts with DHX33. Ufmylated by UFL1 in response to endoplasmic reticulum stress, promoting reticulophagy of endoplasmic reticulum sheets.

Its subcellular location is the cytoplasm. In terms of biological role, component of the large ribosomal subunit. The ribosome is a large ribonucleoprotein complex responsible for the synthesis of proteins in the cell. This chain is Large ribosomal subunit protein uL24 (Rpl26), found in Rattus norvegicus (Rat).